The following is a 399-amino-acid chain: Sperm equatorial segment protein 1 (399 aa).

The signal sequence occupies residues 1 to 18; it reads MKLVVLVALWLWPSSLLA. N-linked (GlcNAc...) asparagine glycosylation is present at Asn128. Positions 136-145 are enriched in basic and acidic residues; sequence EEPFIEKEPE. The interval 136–250 is disordered; sequence EEPFIEKEPE…PSAEDLPGRH (115 aa). Residues 157–167 are compositionally biased toward acidic residues; it reads PEPELEPEPEP. The segment covering 182–206 has biased composition (polar residues); that stretch reads VTSTTPNKELTGTSRISSMATQPAN. Over residues 207 to 225 the composition is skewed to low complexity; it reads TQATRITVTVKTTSTMDVS.

The protein belongs to the SPESP1 family. Glycosylated. In testis there are two predominant forms of 77- and 67-kDa and a form of 47-kDa, whereas in epididymal sperm from caput, corpus, and cauda there are two forms of 47- and 43-kDa. Testis forms contain complex carbohydrate residues. Epididymal sperm forms are N-glycosylated. Then undergoes significant glycosylation in the testis and that the majority of these glycoconjugates are removed by the time sperm reach the caput epididymis. Testis specific.

It localises to the cytoplasmic vesicle. The protein localises to the secretory vesicle. The protein resides in the acrosome. In terms of biological role, involved in fertilization ability of sperm. This chain is Sperm equatorial segment protein 1, found in Mus musculus (Mouse).